The sequence spans 1086 residues: Formin-like protein 2 (1086 aa).

Residue Gly2 is the site of N-myristoyl glycine attachment. Residues 23–469 (LPMPEPGELE…EAIQRQSTLE (447 aa)) enclose the GBD/FH3 domain. The residue at position 188 (Ser188) is a Phosphoserine. Positions 513 to 597 (SVGPTMGAAS…APPLPSAPPL (85 aa)) are disordered. Positions 525-537 (PLPPPPPPLPPSS) are enriched in pro residues. A compositionally biased stretch (polar residues) spans 538–547 (DTPETVQNGP). Composition is skewed to pro residues over residues 548–576 (VTPP…PLPG) and 583–597 (PAPP…APPL). Residues 616–1007 (IKKPIKTKFR…LMEKLLEQEA (392 aa)) enclose the FH2 domain. The 40-residue stretch at 1040-1079 (NRHVYEGKDGAIEDIITVLKTVPFTARTAKRGSRFFCEPV) folds into the DAD domain.

It belongs to the formin homology family.

The protein resides in the cytoplasm. Functionally, plays a role in the regulation of cell morphology and cytoskeletal organization. Required in the cortical actin filament dynamics. The sequence is that of Formin-like protein 2 from Homo sapiens (Human).